Here is a 44-residue protein sequence, read N- to C-terminus: Diuretic hormone (44 aa).

Val-44 is subject to Valine amide.

The protein resides in the secreted. Functionally, regulation of fluid secretion. Stimulates primary urine secretion by Malpighian tubules and causes a dose-dependent stimulation of cAMP levels in the tubules. May act as clearance peptide in that it may remove metabolic waste from the hemolymph. The polypeptide is Diuretic hormone (Stomoxys calcitrans (Stable fly)).